A 316-amino-acid chain; its full sequence is Protoheme IX farnesyltransferase (316 aa).

Transmembrane regions (helical) follow at residues 28–48 (IIPL…KGQV), 50–70 (PLLL…AQTL), 99–119 (HALI…VFFV), 122–142 (LSGF…THLL), 150–170 (IVIG…AVTG), 178–198 (ILFA…ALMI), 223–243 (IWLY…PLAA), 244–264 (CGVV…KKAW), and 293–313 (AMVI…ASLF).

It belongs to the UbiA prenyltransferase family. Protoheme IX farnesyltransferase subfamily.

The protein resides in the cell inner membrane. The enzyme catalyses heme b + (2E,6E)-farnesyl diphosphate + H2O = Fe(II)-heme o + diphosphate. It functions in the pathway porphyrin-containing compound metabolism; heme O biosynthesis; heme O from protoheme: step 1/1. Its function is as follows. Converts heme B (protoheme IX) to heme O by substitution of the vinyl group on carbon 2 of heme B porphyrin ring with a hydroxyethyl farnesyl side group. The protein is Protoheme IX farnesyltransferase of Microcystis aeruginosa (strain NIES-843 / IAM M-2473).